The following is a 211-amino-acid chain: Protein-L-isoaspartate O-methyltransferase (211 aa).

The active site involves serine 62.

The protein belongs to the methyltransferase superfamily. L-isoaspartyl/D-aspartyl protein methyltransferase family.

The protein localises to the cytoplasm. The enzyme catalyses [protein]-L-isoaspartate + S-adenosyl-L-methionine = [protein]-L-isoaspartate alpha-methyl ester + S-adenosyl-L-homocysteine. Catalyzes the methyl esterification of L-isoaspartyl residues in peptides and proteins that result from spontaneous decomposition of normal L-aspartyl and L-asparaginyl residues. It plays a role in the repair and/or degradation of damaged proteins. The polypeptide is Protein-L-isoaspartate O-methyltransferase (Shewanella sp. (strain ANA-3)).